The following is a 111-amino-acid chain: Photosystem II reaction center Psb28 protein (111 aa).

This sequence belongs to the Psb28 family. As to quaternary structure, part of the photosystem II complex.

It is found in the cellular thylakoid membrane. The chain is Photosystem II reaction center Psb28 protein from Nostoc sp. (strain PCC 7120 / SAG 25.82 / UTEX 2576).